The primary structure comprises 283 residues: Urease accessory protein UreD 2 (283 aa).

Residues 1-11 show a composition bias toward basic and acidic residues; sequence MGRRAPDRLDR. A disordered region spans residues 1–30; the sequence is MGRRAPDRLDRGVTTTSPRTQAPPQAGRGV. Over residues 13–23 the composition is skewed to polar residues; it reads VTTTSPRTQAP.

The protein belongs to the UreD family. In terms of assembly, ureD, UreF and UreG form a complex that acts as a GTP-hydrolysis-dependent molecular chaperone, activating the urease apoprotein by helping to assemble the nickel containing metallocenter of UreC. The UreE protein probably delivers the nickel.

Its subcellular location is the cytoplasm. Functionally, required for maturation of urease via the functional incorporation of the urease nickel metallocenter. The protein is Urease accessory protein UreD 2 of Saccharopolyspora erythraea (strain ATCC 11635 / DSM 40517 / JCM 4748 / NBRC 13426 / NCIMB 8594 / NRRL 2338).